Here is a 513-residue protein sequence, read N- to C-terminus: Coniferin beta-glucosidase (513 aa).

Positions 1–23 (MEVSVLMWVLLFYSLLGFQVTTA) are cleaved as a signal peptide. A beta-D-glucoside contacts are provided by residues Gln-44, His-145, and 190 to 191 (NE). Catalysis depends on Glu-191, which acts as the Proton donor. A disulfide bridge connects residues Cys-210 and Cys-219. An N-linked (GlcNAc...) asparagine glycan is attached at Asn-223. 2 residues coordinate a beta-D-glucoside: Tyr-336 and Glu-408. Catalysis depends on Glu-408, which acts as the Nucleophile. N-linked (GlcNAc...) asparagine glycosylation is present at Asn-447. Residues Trp-457, 464-465 (EW), and Phe-473 contribute to the a beta-D-glucoside site.

It belongs to the glycosyl hydrolase 1 family. As to quaternary structure, homodimer. Post-translationally, glycosylated.

It catalyses the reaction 4-O-(beta-D-glucosyl)-(E)-coniferol + H2O = (E)-coniferol + D-glucose. With respect to regulation, inhibited by glucono-1,5-lactone, but not by bromoconduritol or conduritol B epoxide. Functionally, involved in the release of monolignols for lignin biosynthesis. Unable to hydrolyze 4-nitrophenyl beta-cellobioside or alpha-linked methylumbelliferyl glucoside. This chain is Coniferin beta-glucosidase, found in Pinus contorta (Shore pine).